The sequence spans 404 residues: Cysteine desulfurase IscS (404 aa).

Pyridoxal 5'-phosphate contacts are provided by residues 75 to 76 (AT), asparagine 155, glutamine 183, and 203 to 205 (SAH). Lysine 206 carries the post-translational modification N6-(pyridoxal phosphate)lysine. Threonine 243 contributes to the pyridoxal 5'-phosphate binding site. The active-site Cysteine persulfide intermediate is the cysteine 328. Position 328 (cysteine 328) interacts with [2Fe-2S] cluster.

This sequence belongs to the class-V pyridoxal-phosphate-dependent aminotransferase family. NifS/IscS subfamily. In terms of assembly, homodimer. Forms a heterotetramer with IscU, interacts with other sulfur acceptors. Pyridoxal 5'-phosphate serves as cofactor.

The protein localises to the cytoplasm. It carries out the reaction (sulfur carrier)-H + L-cysteine = (sulfur carrier)-SH + L-alanine. The protein operates within cofactor biosynthesis; iron-sulfur cluster biosynthesis. Functionally, master enzyme that delivers sulfur to a number of partners involved in Fe-S cluster assembly, tRNA modification or cofactor biosynthesis. Catalyzes the removal of elemental sulfur atoms from cysteine to produce alanine. Functions as a sulfur delivery protein for Fe-S cluster synthesis onto IscU, an Fe-S scaffold assembly protein, as well as other S acceptor proteins. The polypeptide is Cysteine desulfurase IscS (Pseudomonas putida (strain W619)).